The primary structure comprises 201 residues: Holliday junction branch migration complex subunit RuvA (201 aa).

Positions 1 to 63 (MIASVRGEVL…EDSMTLYGFA (63 aa)) are domain I. The interval 64 to 142 (DTEARDLFGL…LVPVQAGPPG (79 aa)) is domain II. Residues 143 to 153 (STPAVAATPVR) are flexible linker. Positions 153–201 (REQVVEALTGLGFPLKQAEQALDTVLAEQPAADTSTALRAALSLLGKNR) are domain III.

It belongs to the RuvA family. In terms of assembly, homotetramer. Forms an RuvA(8)-RuvB(12)-Holliday junction (HJ) complex. HJ DNA is sandwiched between 2 RuvA tetramers; dsDNA enters through RuvA and exits via RuvB. An RuvB hexamer assembles on each DNA strand where it exits the tetramer. Each RuvB hexamer is contacted by two RuvA subunits (via domain III) on 2 adjacent RuvB subunits; this complex drives branch migration. In the full resolvosome a probable DNA-RuvA(4)-RuvB(12)-RuvC(2) complex forms which resolves the HJ.

It is found in the cytoplasm. Functionally, the RuvA-RuvB-RuvC complex processes Holliday junction (HJ) DNA during genetic recombination and DNA repair, while the RuvA-RuvB complex plays an important role in the rescue of blocked DNA replication forks via replication fork reversal (RFR). RuvA specifically binds to HJ cruciform DNA, conferring on it an open structure. The RuvB hexamer acts as an ATP-dependent pump, pulling dsDNA into and through the RuvAB complex. HJ branch migration allows RuvC to scan DNA until it finds its consensus sequence, where it cleaves and resolves the cruciform DNA. This is Holliday junction branch migration complex subunit RuvA from Nocardia farcinica (strain IFM 10152).